The chain runs to 465 residues: Ribulose bisphosphate carboxylase large chain (465 aa).

Lysine 4 carries the post-translational modification N6,N6,N6-trimethyllysine. Residues asparagine 113 and threonine 163 each contribute to the substrate site. The active-site Proton acceptor is the lysine 165. Substrate is bound at residue lysine 167. Residues lysine 191, aspartate 193, and glutamate 194 each contribute to the Mg(2+) site. Lysine 191 bears the N6-carboxylysine mark. The active-site Proton acceptor is histidine 284. 3 residues coordinate substrate: arginine 285, histidine 317, and serine 369.

This sequence belongs to the RuBisCO large chain family. Type I subfamily. In terms of assembly, heterohexadecamer of 8 large chains and 8 small chains; disulfide-linked. The disulfide link is formed within the large subunit homodimers. It depends on Mg(2+) as a cofactor. The disulfide bond which can form in the large chain dimeric partners within the hexadecamer appears to be associated with oxidative stress and protein turnover.

Its subcellular location is the plastid. It is found in the chloroplast. The enzyme catalyses 2 (2R)-3-phosphoglycerate + 2 H(+) = D-ribulose 1,5-bisphosphate + CO2 + H2O. It carries out the reaction D-ribulose 1,5-bisphosphate + O2 = 2-phosphoglycolate + (2R)-3-phosphoglycerate + 2 H(+). RuBisCO catalyzes two reactions: the carboxylation of D-ribulose 1,5-bisphosphate, the primary event in carbon dioxide fixation, as well as the oxidative fragmentation of the pentose substrate in the photorespiration process. Both reactions occur simultaneously and in competition at the same active site. The polypeptide is Ribulose bisphosphate carboxylase large chain (Bursera inaguensis (Elaphrium inaguense)).